The chain runs to 204 residues: UPF0215 protein MTH_1316 (204 aa).

The protein belongs to the UPF0215 family.

This chain is UPF0215 protein MTH_1316, found in Methanothermobacter thermautotrophicus (strain ATCC 29096 / DSM 1053 / JCM 10044 / NBRC 100330 / Delta H) (Methanobacterium thermoautotrophicum).